Here is a 384-residue protein sequence, read N- to C-terminus: Alpha-2B adrenergic receptor (384 aa).

Residues 1-25 traverse the membrane as a helical segment; that stretch reads AIAAVTTFLILFTVFGNALVILAVL. Residues 26–36 lie on the Cytoplasmic side of the membrane; it reads TSRSLRAPQNL. A helical membrane pass occupies residues 37–62; that stretch reads FLVSLAAADILVATLIXPFSLANELL. The Extracellular segment spans residues 63–72; it reads GYWYFWHTWC. Cys72 and Cys151 are joined by a disulfide. The chain crosses the membrane as a helical span at residues 73–95; that stretch reads EVYLALXVLXCTSSIVHLCAISL. Residues 96–117 lie on the Cytoplasmic side of the membrane; that stretch reads DRYWAVSRALEYNSKRTPRRIX. A helical membrane pass occupies residues 118-140; it reads GIILTVWLIAAAISLPPLIYKGD. Residues 141 to 156 lie on the Extracellular side of the membrane; sequence QGPQPHGRPQCRLNQE. Residues 157-180 form a helical membrane-spanning segment; sequence AWYILSSSIGSFFAPCLIMILVYL. Residues 181 to 348 lie on the Cytoplasmic side of the membrane; that stretch reads RIYLIAKRRN…LTREKRFTFV (168 aa). A disordered region spans residues 193 to 306; sequence GPRAQGASKG…SXGSPQLQQP (114 aa). The span at 288–306 shows a compositional bias: low complexity; that stretch reads PEALPASPASXGSPQLQQP. A helical transmembrane segment spans residues 349-372; the sequence is LAVVIGVXVLCWFPFFXSYSLGAI. Over 373-381 the chain is Extracellular; the sequence is CPQHCTVXH. A helical transmembrane segment spans residues 382 to 384; sequence GLF.

It belongs to the G-protein coupled receptor 1 family. Adrenergic receptor subfamily. ADRA2B sub-subfamily. Interacts with RAB26. Interacts with PPP1R9B. Interacts with GGA1, GGA2 and GGA3.

It is found in the cell membrane. Functionally, alpha-2 adrenergic receptors mediate the catecholamine-induced inhibition of adenylate cyclase through the action of G proteins. In Echinops telfairi (Lesser hedgehog tenrec), this protein is Alpha-2B adrenergic receptor (ADRA2B).